We begin with the raw amino-acid sequence, 344 residues long: MTDTSRNRKVRGSKIRSSRSDKRQSRGSEDKELKRLADARDTDSEQAGDRVGDAFIPDEQSFIETDAVARVTDRMRRWLSVDRPVHLIGPTGCGKTAVAMHVARTRDRPVVWVNGDADLTTSDLVGEYAETERISEHDQFIHNVVKRKDIVRDRWVDNPLTLAVQEGATLVYNEFSRTKPVANNVLLSVFEEGVLELPGKRGASRYVDVHPAFRTILTSNSVEYAGVHEPQDALLDRLVGLHMDFYDAETETAIVRAHVEAADVPVAAIVGMMRELRERLEITVGTRAAIMAAEGLTAADDPDADTVVDVCTDVLASKVSQRSDVEALRDVIEETLADRGVTLS.

The interval 1–55 (MTDTSRNRKVRGSKIRSSRSDKRQSRGSEDKELKRLADARDTDSEQAGDRVGDAF) is disordered. Basic residues predominate over residues 7 to 17 (NRKVRGSKIRS). The span at 18–52 (SRSDKRQSRGSEDKELKRLADARDTDSEQAGDRVG) shows a compositional bias: basic and acidic residues. ATP is bound at residue 89–96 (GPTGCGKT).

Belongs to the CbbQ/NirQ/NorQ/GpvN family. As to quaternary structure, forms homodimers, a GvpN-GvpO heterodimer, interacts with GvpC and GvpL, might interact with GvpA.

Its subcellular location is the gas vesicle. It localises to the cytoplasm. It carries out the reaction ATP + H2O = ADP + phosphate + H(+). An ATPase that functions in gas vesicle formation. A minor component of the gas vesicle, also found in soluble extracts. Gas vesicles are hollow, gas filled proteinaceous nanostructures found in several microbial planktonic microorganisms. They allow positioning of halobacteria at the optimal depth for growth in the poorly aerated, shallow brine pools of their habitat. Its function is as follows. Expression of 2 c-vac DNA fragments containing 2 divergently transcribed regions (gvpE-gvpF-gvpG-gvpH-gvpI-gvpJ-gvpK-gvpL-gvpM and gvpA-gvpC-gvpN-gvpO) allows H.volcanii to produce gas vesicles. In Halobacterium salinarum (strain ATCC 700922 / JCM 11081 / NRC-1) (Halobacterium halobium), this protein is Gas vesicle ATPase GvpN2.